Here is a 155-residue protein sequence, read N- to C-terminus: Small ribosomal subunit protein uS9 (155 aa).

The protein belongs to the universal ribosomal protein uS9 family.

This chain is Small ribosomal subunit protein uS9, found in Allorhizobium ampelinum (strain ATCC BAA-846 / DSM 112012 / S4) (Agrobacterium vitis (strain S4)).